We begin with the raw amino-acid sequence, 197 residues long: UPF0301 protein AnaeK_4073 (197 aa).

This sequence belongs to the UPF0301 (AlgH) family.

The sequence is that of UPF0301 protein AnaeK_4073 from Anaeromyxobacter sp. (strain K).